Reading from the N-terminus, the 264-residue chain is Orotidine 5'-phosphate decarboxylase (264 aa).

Substrate is bound by residues D40, 62–64, 93–102, Y214, and R233; these read KTH and DRKFADIGNT. K95 acts as the Proton donor in catalysis.

The protein belongs to the OMP decarboxylase family.

The catalysed reaction is orotidine 5'-phosphate + H(+) = UMP + CO2. Its pathway is pyrimidine metabolism; UMP biosynthesis via de novo pathway; UMP from orotate: step 2/2. This is Orotidine 5'-phosphate decarboxylase (ura4) from Schizosaccharomyces pombe (strain 972 / ATCC 24843) (Fission yeast).